A 147-amino-acid chain; its full sequence is MEVILLDKVNKLGGIGDVAVVKPGYARNFLIPNKKAVMATKANLASFEERRVELEAQAAERKAAAEARALTLEGKTFTIAANAGDEGKLFGSIGTRDIADAISTQVAVEKAEIRLPEGAIRHTGSFEVDVQLHSEVIVTVTLEVIAE.

It belongs to the bacterial ribosomal protein bL9 family.

Functionally, binds to the 23S rRNA. The chain is Large ribosomal subunit protein bL9 from Marinomonas sp. (strain MWYL1).